A 382-amino-acid chain; its full sequence is Pyrimidine monooxygenase RutA (382 aa).

FMN-binding positions include 68-69 (IK), N134, E143, 159-160 (RY), and S209.

This sequence belongs to the NtaA/SnaA/DszA monooxygenase family. RutA subfamily.

The enzyme catalyses uracil + FMNH2 + NADH + O2 = (Z)-3-ureidoacrylate + FMN + NAD(+) + H2O + H(+). The catalysed reaction is thymine + FMNH2 + NADH + O2 = (Z)-2-methylureidoacrylate + FMN + NAD(+) + H2O + H(+). In terms of biological role, catalyzes the pyrimidine ring opening between N-3 and C-4 by an unusual flavin hydroperoxide-catalyzed mechanism, adding oxygen atoms in the process to yield ureidoacrylate peracid, that immediately reacts with FMN forming ureidoacrylate and FMN-N(5)-oxide. The FMN-N(5)-oxide reacts spontaneously with NADH to produce FMN. Requires the flavin reductase RutF to regenerate FMN in vivo. The sequence is that of Pyrimidine monooxygenase RutA from Escherichia coli O55:H7 (strain CB9615 / EPEC).